A 64-amino-acid polypeptide reads, in one-letter code: MLKFLLKFRKRRRPVVVPRFVRFIVYVVLFTVAVQRVKQERDAHLRRYEERLRKNRARRRQSFP.

The chain crosses the membrane as a helical span at residues 15–37 (VVVPRFVRFIVYVVLFTVAVQRV).

This sequence belongs to the HHV-5 US34A protein family.

It is found in the host membrane. This is an uncharacterized protein from Human cytomegalovirus (strain AD169) (HHV-5).